Consider the following 194-residue polypeptide: Archaetidylinositol phosphate synthase (194 aa).

The next 2 membrane-spanning stretches (helical) occupy residues 32-51 (IYTLASPVAAAAALPAWLYI) and 58-78 (LLIALSLLLDAVDGAVARFTG). Residues aspartate 67, aspartate 70, aspartate 88, and aspartate 92 each coordinate Mg(2+). Aspartate 92 acts as the Proton acceptor in catalysis. Helical transmembrane passes span 103-123 (LYIAGVHPLIVIAMLSGGLIV), 150-170 (IAILAILAISIYNLQTALALA), and 172-192 (AAAVLVWITVIQRMVYIAGEL).

It belongs to the CDP-alcohol phosphatidyltransferase class-I family. Mn(2+) serves as cofactor. It depends on Mg(2+) as a cofactor.

The protein resides in the cell membrane. It carries out the reaction CDP-2,3-bis-O-(phytanyl)-sn-glycerol + 1D-myo-inositol 3-phosphate = saturated 1-archaetidyl-1D-myo-inositol 3-phosphate + CMP + H(+). It participates in lipid metabolism; phospholipid metabolism. Functionally, catalyzes the formation of archaetidylinositol phosphate (AIP) from CDP-archaeol (CDP-ArOH or CDP-2,3-bis-(O-phytanyl)-sn-glycerol) and 1L-myo-inositol 1-phosphate (IP or 1D-myo-inositol 3-phosphate). AIP is a precursor of archaetidyl-myo-inositol (AI), an ether-type inositol phospholipid ubiquitously distributed in archaea membranes and essential for glycolipid biosynthesis in archaea. The protein is Archaetidylinositol phosphate synthase of Aeropyrum pernix (strain ATCC 700893 / DSM 11879 / JCM 9820 / NBRC 100138 / K1).